We begin with the raw amino-acid sequence, 598 residues long: Elongation factor 4 (598 aa).

In terms of domain architecture, tr-type G spans 4-181 (KKIRNFAIIA…AIVNLIPPPQ (178 aa)). GTP-binding positions include 16–21 (DHGKST) and 128–131 (NKID).

Belongs to the TRAFAC class translation factor GTPase superfamily. Classic translation factor GTPase family. LepA subfamily.

Its subcellular location is the cell membrane. The catalysed reaction is GTP + H2O = GDP + phosphate + H(+). Required for accurate and efficient protein synthesis under certain stress conditions. May act as a fidelity factor of the translation reaction, by catalyzing a one-codon backward translocation of tRNAs on improperly translocated ribosomes. Back-translocation proceeds from a post-translocation (POST) complex to a pre-translocation (PRE) complex, thus giving elongation factor G a second chance to translocate the tRNAs correctly. Binds to ribosomes in a GTP-dependent manner. This chain is Elongation factor 4, found in Mesomycoplasma hyopneumoniae (strain J / ATCC 25934 / NCTC 10110) (Mycoplasma hyopneumoniae).